Here is a 476-residue protein sequence, read N- to C-terminus: Aspartyl/glutamyl-tRNA(Asn/Gln) amidotransferase subunit B (476 aa).

This sequence belongs to the GatB/GatE family. GatB subfamily. In terms of assembly, heterotrimer of A, B and C subunits.

It carries out the reaction L-glutamyl-tRNA(Gln) + L-glutamine + ATP + H2O = L-glutaminyl-tRNA(Gln) + L-glutamate + ADP + phosphate + H(+). The enzyme catalyses L-aspartyl-tRNA(Asn) + L-glutamine + ATP + H2O = L-asparaginyl-tRNA(Asn) + L-glutamate + ADP + phosphate + 2 H(+). In terms of biological role, allows the formation of correctly charged Asn-tRNA(Asn) or Gln-tRNA(Gln) through the transamidation of misacylated Asp-tRNA(Asn) or Glu-tRNA(Gln) in organisms which lack either or both of asparaginyl-tRNA or glutaminyl-tRNA synthetases. The reaction takes place in the presence of glutamine and ATP through an activated phospho-Asp-tRNA(Asn) or phospho-Glu-tRNA(Gln). The chain is Aspartyl/glutamyl-tRNA(Asn/Gln) amidotransferase subunit B from Shouchella clausii (strain KSM-K16) (Alkalihalobacillus clausii).